Consider the following 191-residue polypeptide: UPF0312 protein Sputw3181_1309 (191 aa).

Positions 1-22 (MKKQLLSALIGVSLLVPMAASA) are cleaved as a signal peptide.

Belongs to the UPF0312 family. Type 1 subfamily.

Its subcellular location is the periplasm. In Shewanella sp. (strain W3-18-1), this protein is UPF0312 protein Sputw3181_1309.